Here is a 357-residue protein sequence, read N- to C-terminus: MKLLGFLIVGLSAISALKTKALHLTCEQELRPYSAVVDANCMAFALNGSNIHEAIKYLQAMNIKKAYVLYWNDHDLRGTPMVLYDNGALAPFDPYTNTAKYVLCVEACPCPGSKAASVGGFQAATSSEKIYVEGSARPAQCSEVCIEPVERRPHYKKIVVNPSPSNCIPCEPECYDSSSSSECNKKRCKTFPRICKEKCGSRRRGCPRKVEVLKSQKTYTFDIEKYRRRGEVVVRVCSKDSKEKFERFILSRNGEIRGNNNKNCILEPLPKCLRCPGQLHKLKKHIERKVCQEVCMYINAKCDIFVLVGDCDFYRVVVNDRRRYRNLHLKKVRGHKLRELIKHGLFGVEFGPLDLDR.

The signal sequence occupies residues M1–A16. N-linked (GlcNAc...) asparagine glycosylation occurs at N47. The short motif at E150–I158 is the HBM1 element. Positions L329–G334 match the HBM2 motif.

It is found in the spore wall. The protein resides in the spore. The protein localises to the perispore. In terms of biological role, spore wall protein involved in the adhesion to host cells surface glycoaminoglycans (GAGs). Microsporidian spore adherence is an integral part of activation and host cell invasion which requires the extrusion at the spore apex of a very long and coiled structure, the polar tube, through which the sporoplasm is pushed to enter into the potential host cell. The polypeptide is Spore wall and anchoring disk complex protein EnP1 (EnP1) (Encephalitozoon cuniculi (strain GB-M1) (Microsporidian parasite)).